The sequence spans 185 residues: Threonylcarbamoyl-AMP synthase (185 aa).

Residues 3 to 185 (EQAPAEVKQV…IDAISGKILR (183 aa)) enclose the YrdC-like domain.

The protein belongs to the SUA5 family. TsaC subfamily.

The protein localises to the cytoplasm. The enzyme catalyses L-threonine + hydrogencarbonate + ATP = L-threonylcarbamoyladenylate + diphosphate + H2O. Functionally, required for the formation of a threonylcarbamoyl group on adenosine at position 37 (t(6)A37) in tRNAs that read codons beginning with adenine. Catalyzes the conversion of L-threonine, HCO(3)(-)/CO(2) and ATP to give threonylcarbamoyl-AMP (TC-AMP) as the acyladenylate intermediate, with the release of diphosphate. This chain is Threonylcarbamoyl-AMP synthase, found in Shewanella woodyi (strain ATCC 51908 / MS32).